The chain runs to 780 residues: Neutral ceramidase (780 aa).

Residues 1-12 (MAKRTFSNLETF) lie on the Cytoplasmic side of the membrane. The chain crosses the membrane as a helical; Signal-anchor for type II membrane protein span at residues 13-33 (LIFLLVMMSAITVALLSLLFI). Residues 34–780 (TSGTIENHKD…TSPAFEVVTI (747 aa)) lie on the Lumenal side of the membrane. The interval 47–90 (HFFSTTQSPPATQGSTAAQRSTATQHSTATQSSTATQTSPVPLT) is disordered. Residues 57-85 (ATQGSTAAQRSTATQHSTATQSSTATQTS) show a composition bias toward low complexity. Thr62 carries O-linked (GalNAc...) threonine glycosylation. Residue Ser67 is glycosylated (O-linked (GalNAc...) serine). O-linked (GalNAc...) threonine glycans are attached at residues Thr68 and Thr70. Ser73 carries O-linked (GalNAc...) serine glycosylation. Thr74 and Thr76 each carry an O-linked (GalNAc...) threonine glycan. Ser78 and Ser79 each carry an O-linked (GalNAc...) serine glycan. O-linked (GalNAc...) threonine glycans are attached at residues Thr80, Thr82, and Thr84. N-linked (GlcNAc...) asparagine glycosylation occurs at Asn98. Residue Leu134 participates in Ca(2+) binding. Asn151 carries an N-linked (GlcNAc...) asparagine glycan. Position 194 (His194) interacts with Zn(2+). Asn217 carries N-linked (GlcNAc...) asparagine glycosylation. Position 303 (His303) interacts with Zn(2+). Residue Asn308 is glycosylated (N-linked (GlcNAc...) asparagine). Catalysis depends on Ser354, which acts as the Nucleophile. Disulfide bonds link Cys362–Cys376 and Cys369–Cys384. Residues Asn440 and Asn468 are each glycosylated (N-linked (GlcNAc...) asparagine). Cys448 and Cys498 are disulfide-bonded. Glu540 lines the Zn(2+) pocket. N-linked (GlcNAc...) asparagine glycosylation occurs at Asn564. Tyr579 serves as a coordination point for Zn(2+). Ca(2+)-binding residues include Asp712, Ser714, and Thr717. The N-linked (GlcNAc...) asparagine glycan is linked to Asn730. Residues 770 to 780 (GTSPAFEVVTI) form a required for correct folding and localization region. Thr779 carries O-linked (GalNAc...) threonine glycosylation.

The protein belongs to the neutral ceramidase family. It depends on Zn(2+) as a cofactor. Proteolytic cleavage of the N-terminus removes the signal-anchor and produces a soluble form of the protein. In terms of processing, N-glycosylated. Required for enzyme activity. Post-translationally, O-glycosylated. Required to retain it as a type II membrane protein at the cell surface. Phosphorylated. May prevent ubiquitination and subsequent degradation. In terms of processing, ubiquitinated, leading to its degradation by the proteasome. Ubiquitination is triggered by nitric oxide. In terms of tissue distribution, primarily expressed in intestine. Ubiquitously expressed with higher levels in kidney, skeletal muscle and heart. The ubiquitous expression observed for ASAH2 might be an experimental artifact due to the paralog ASAH2B.

Its subcellular location is the cell membrane. The protein resides in the membrane raft. The protein localises to the membrane. It localises to the caveola. It is found in the golgi apparatus membrane. Its subcellular location is the mitochondrion. The protein resides in the secreted. The protein localises to the extracellular exosome. It carries out the reaction an N-acylsphing-4-enine + H2O = sphing-4-enine + a fatty acid. The enzyme catalyses N-dodecanoylsphing-4-enine + H2O = dodecanoate + sphing-4-enine. It catalyses the reaction N-hexadecanoylsphing-4-enine + H2O = sphing-4-enine + hexadecanoate. The catalysed reaction is N-octanoylsphing-4-enine + H2O = octanoate + sphing-4-enine. It carries out the reaction N-(hexanoyl)sphing-4-enine + H2O = hexanoate + sphing-4-enine. The enzyme catalyses N-octadecanoylsphing-4-enine + H2O = sphing-4-enine + octadecanoate. It catalyses the reaction N-tetradecanoylsphing-4-enine + H2O = tetradecanoate + sphing-4-enine. The catalysed reaction is N-(9Z-octadecenoyl)-sphing-4-enine + H2O = sphing-4-enine + (9Z)-octadecenoate. It carries out the reaction N-(15Z-tetracosenoyl)-sphing-4-enine + H2O = (15Z)-tetracosenoate + sphing-4-enine. The enzyme catalyses sphinganine + hexadecanoate = N-hexadecanoylsphinganine + H2O. It catalyses the reaction N-(octadecanoyl)-sphinganine + H2O = sphinganine + octadecanoate. It participates in lipid metabolism; sphingolipid metabolism. Its activity is regulated as follows. Inhibited by dithiothreitol (DTT) and 2-mercaptoethanol. Activity is mildly stimulated by Ca(2+) and Mg(2+), but is not inhibited by EDTA. Activity is inhibited by millimolar levels of Fe(2+), Zn(2+) and Cu(2+). Inhibited by cholesterol. Plasma membrane ceramidase that hydrolyzes sphingolipid ceramides into sphingosine and free fatty acids at neutral pH. Ceramides, sphingosine, and its phosphorylated form sphingosine-1-phosphate are bioactive lipids that mediate cellular signaling pathways regulating several biological processes including cell proliferation, apoptosis and differentiation. Also catalyzes the reverse reaction allowing the synthesis of ceramides from fatty acids and sphingosine. Together with sphingomyelinase, participates in the production of sphingosine and sphingosine-1-phosphate from the degradation of sphingomyelin, a sphingolipid enriched in the plasma membrane of cells. Also participates in the hydrolysis of ceramides from the extracellular milieu allowing the production of sphingosine-1-phosphate inside and outside cells. This is the case for instance with the digestion of dietary sphingolipids in the intestinal tract. This chain is Neutral ceramidase (ASAH2), found in Homo sapiens (Human).